Here is a 273-residue protein sequence, read N- to C-terminus: Large ribosomal subunit protein uL2 (273 aa).

2 disordered regions span residues Leu-34–Ile-54 and Val-223–Lys-273.

Belongs to the universal ribosomal protein uL2 family. In terms of assembly, part of the 50S ribosomal subunit. Forms a bridge to the 30S subunit in the 70S ribosome.

Functionally, one of the primary rRNA binding proteins. Required for association of the 30S and 50S subunits to form the 70S ribosome, for tRNA binding and peptide bond formation. It has been suggested to have peptidyltransferase activity; this is somewhat controversial. Makes several contacts with the 16S rRNA in the 70S ribosome. This Pseudomonas aeruginosa (strain LESB58) protein is Large ribosomal subunit protein uL2.